The primary structure comprises 295 residues: MADYLVRAIGAGGNVRAFAAVTTALTEEARRRHDTWPVATAALGRALTGTALLAATLKDPNESLTLRVAGDGPLRGILCDADEQGHVRGYVTEPHVDLEPAARGKLNVGAAVGTGMLYVTRQLALQGIYTGSSELVSGEIAEDLAYYLTRSEQTPSAVGLGVRVGPDGAVVAAGGYMVQLLPATPDADRDRLEENLGRLGSVSLAVEQGMTPEEILSVVLTGIDYQILERRDLSFPCRCSRERALGAIALLDETELSGLVEEGRGAELTCHFCNAVYRFSPEEVLQVQRGMKDKQ.

2 disulfide bridges follow: cysteine 237–cysteine 239 and cysteine 270–cysteine 273.

Belongs to the HSP33 family. In terms of processing, under oxidizing conditions two disulfide bonds are formed involving the reactive cysteines. Under reducing conditions zinc is bound to the reactive cysteines and the protein is inactive.

Its subcellular location is the cytoplasm. Functionally, redox regulated molecular chaperone. Protects both thermally unfolding and oxidatively damaged proteins from irreversible aggregation. Plays an important role in the bacterial defense system toward oxidative stress. The polypeptide is 33 kDa chaperonin (Symbiobacterium thermophilum (strain DSM 24528 / JCM 14929 / IAM 14863 / T)).